We begin with the raw amino-acid sequence, 223 residues long: Cytochrome c biogenesis ATP-binding export protein CcmA (223 aa).

Positions 1–223 constitute an ABC transporter domain; it reads MRSLACERDE…KSDMAVGNDY (223 aa). 31–38 is a binding site for ATP; the sequence is GSNGAGKT.

It belongs to the ABC transporter superfamily. CcmA exporter (TC 3.A.1.107) family. As to quaternary structure, the complex is composed of two ATP-binding proteins (CcmA) and two transmembrane proteins (CcmB).

Its subcellular location is the cell inner membrane. It carries out the reaction heme b(in) + ATP + H2O = heme b(out) + ADP + phosphate + H(+). Part of the ABC transporter complex CcmAB involved in the biogenesis of c-type cytochromes; once thought to export heme, this seems not to be the case, but its exact role is uncertain. Responsible for energy coupling to the transport system. The sequence is that of Cytochrome c biogenesis ATP-binding export protein CcmA from Saccharophagus degradans (strain 2-40 / ATCC 43961 / DSM 17024).